Consider the following 411-residue polypeptide: Arginine deiminase (411 aa).

Cys-401 functions as the Amidino-cysteine intermediate in the catalytic mechanism.

This sequence belongs to the arginine deiminase family.

The protein resides in the cytoplasm. It catalyses the reaction L-arginine + H2O = L-citrulline + NH4(+). It participates in amino-acid degradation; L-arginine degradation via ADI pathway; carbamoyl phosphate from L-arginine: step 1/2. The chain is Arginine deiminase from Streptococcus equi subsp. zooepidemicus (strain H70).